A 330-amino-acid chain; its full sequence is G-protein coupled receptor 74 (330 aa).

A run of 7 helical transmembrane segments spans residues 50–70 (LIVV…NLWL), 85–105 (FILI…IFSI), 121–141 (MVVF…LCFD), 160–180 (WVFC…QKAL), 210–230 (VAVS…CIFY), 252–272 (MLLF…LSFI), and 295–315 (LPLL…IYIL). An intrachain disulfide couples Cys117 to Cys195.

This sequence belongs to the G-protein coupled receptor 1 family.

The protein resides in the host membrane. The polypeptide is G-protein coupled receptor 74 (74) (Equus caballus (Horse)).